Here is a 204-residue protein sequence, read N- to C-terminus: MVRRRPATGAAPRPHLAAVGRGLLLASVLAAAASSLPVAESSCPRDNSLVRDISRMQQRNYGREGFSHITVTGALAHGTKEVEVWLQTFGPGQRTPIHRHSCEEVFIVLKGKGTLLLGSSSLKYPGQPQEVPVFQNTTFSIPVNDPHQVWNSNEHEDLQVLVIISRPPVKIFIYDDWSMPHTAAKLKFPYFWDEDCLPAPKDEL.

Residues 1–41 form the signal peptide; the sequence is MVRRRPATGAAPRPHLAAVGRGLLLASVLAAAASSLPVAES. A disulfide bridge links C43 with C196. Zn(2+)-binding residues include H98, H100, and E104. N-linked (GlcNAc...) asparagine glycosylation occurs at N136. H147 serves as a coordination point for Zn(2+). The Prevents secretion from ER motif lies at 201 to 204; the sequence is KDEL.

In terms of assembly, homodimer.

Its subcellular location is the endoplasmic reticulum lumen. In terms of biological role, this is probably a receptor for the plant hormone auxin. The polypeptide is Auxin-binding protein 4 (ABP4) (Zea mays (Maize)).